Reading from the N-terminus, the 410-residue chain is LL-diaminopimelate aminotransferase (410 aa).

Tyrosine 15 and glycine 42 together coordinate substrate. Residues tyrosine 72, serine 108–lysine 109, tyrosine 132, asparagine 187, tyrosine 218, and serine 246–serine 248 each bind pyridoxal 5'-phosphate. Substrate is bound by residues lysine 109, tyrosine 132, and asparagine 187. Lysine 249 bears the N6-(pyridoxal phosphate)lysine mark. Arginine 257 and asparagine 292 together coordinate pyridoxal 5'-phosphate. Substrate contacts are provided by asparagine 292 and arginine 388.

Belongs to the class-I pyridoxal-phosphate-dependent aminotransferase family. LL-diaminopimelate aminotransferase subfamily. As to quaternary structure, homodimer. The cofactor is pyridoxal 5'-phosphate.

The catalysed reaction is (2S,6S)-2,6-diaminopimelate + 2-oxoglutarate = (S)-2,3,4,5-tetrahydrodipicolinate + L-glutamate + H2O + H(+). It functions in the pathway amino-acid biosynthesis; L-lysine biosynthesis via DAP pathway; LL-2,6-diaminopimelate from (S)-tetrahydrodipicolinate (aminotransferase route): step 1/1. In terms of biological role, involved in the synthesis of meso-diaminopimelate (m-DAP or DL-DAP), required for both lysine and peptidoglycan biosynthesis. Catalyzes the direct conversion of tetrahydrodipicolinate to LL-diaminopimelate. In Syntrophotalea carbinolica (strain DSM 2380 / NBRC 103641 / GraBd1) (Pelobacter carbinolicus), this protein is LL-diaminopimelate aminotransferase.